A 235-amino-acid polypeptide reads, in one-letter code: RING-H2 finger protein ATL17 (235 aa).

A helical membrane pass occupies residues 1 to 21; sequence MLTTTILILLIVILMVSLHLY. The RING-type; atypical zinc-finger motif lies at 76-118; it reads CSVCLSEFKDNESGRVMPNCKHTFHVHCIDMWFHSHSSCPLCR. Positions 143–167 are disordered; sequence VYGDTNHHEGTETTGDSVPEDSQRK.

It belongs to the RING-type zinc finger family. ATL subfamily.

It localises to the membrane. It carries out the reaction S-ubiquitinyl-[E2 ubiquitin-conjugating enzyme]-L-cysteine + [acceptor protein]-L-lysine = [E2 ubiquitin-conjugating enzyme]-L-cysteine + N(6)-ubiquitinyl-[acceptor protein]-L-lysine.. Its pathway is protein modification; protein ubiquitination. In terms of biological role, may be involved in the early steps of the plant defense signaling pathway. The chain is RING-H2 finger protein ATL17 (ATL17) from Arabidopsis thaliana (Mouse-ear cress).